We begin with the raw amino-acid sequence, 343 residues long: Ribosomal RNA small subunit methyltransferase C (343 aa).

This sequence belongs to the methyltransferase superfamily. RsmC family. Monomer.

It localises to the cytoplasm. It carries out the reaction guanosine(1207) in 16S rRNA + S-adenosyl-L-methionine = N(2)-methylguanosine(1207) in 16S rRNA + S-adenosyl-L-homocysteine + H(+). In terms of biological role, specifically methylates the guanine in position 1207 of 16S rRNA in the 30S particle. This Escherichia coli O6:K15:H31 (strain 536 / UPEC) protein is Ribosomal RNA small subunit methyltransferase C.